The sequence spans 337 residues: Pyridoxal 5'-phosphate synthase subunit PdxS (337 aa).

Aspartate 63 serves as a coordination point for D-ribose 5-phosphate. Residue lysine 120 is the Schiff-base intermediate with D-ribose 5-phosphate of the active site. Glycine 192 provides a ligand contact to D-ribose 5-phosphate. Residue lysine 204 participates in D-glyceraldehyde 3-phosphate binding. D-ribose 5-phosphate-binding positions include glycine 253 and 274 to 275; that span reads GS.

The protein belongs to the PdxS/SNZ family. In terms of assembly, in the presence of PdxT, forms a dodecamer of heterodimers.

The enzyme catalyses aldehydo-D-ribose 5-phosphate + D-glyceraldehyde 3-phosphate + L-glutamine = pyridoxal 5'-phosphate + L-glutamate + phosphate + 3 H2O + H(+). It functions in the pathway cofactor biosynthesis; pyridoxal 5'-phosphate biosynthesis. Its function is as follows. Catalyzes the formation of pyridoxal 5'-phosphate from ribose 5-phosphate (RBP), glyceraldehyde 3-phosphate (G3P) and ammonia. The ammonia is provided by the PdxT subunit. Can also use ribulose 5-phosphate and dihydroxyacetone phosphate as substrates, resulting from enzyme-catalyzed isomerization of RBP and G3P, respectively. The polypeptide is Pyridoxal 5'-phosphate synthase subunit PdxS (Aeropyrum pernix (strain ATCC 700893 / DSM 11879 / JCM 9820 / NBRC 100138 / K1)).